A 1054-amino-acid chain; its full sequence is Desmoglein-1 (1054 aa).

A signal peptide spans 1–23 (MNWHFLRTATVLLIFLVVVEINS). Positions 24–49 (EFRIQVRDYNTKNGTIKWHSIRRQKR) are excised as a propeptide. N-linked (GlcNAc...) asparagine glycans are attached at residues Asn-36, Asn-110, and Asn-180. Cadherin domains are found at residues 50–157 (EWIK…PPVF), 158–269 (SMST…IPYM), 270–389 (EPSS…RPGS), and 386–493 (RPGS…KDSE). The Extracellular segment spans residues 50–566 (EWIKFAAACR…NLSDNVHFGP (517 aa)). The interval 487–554 (GWEKDSEKVT…QSNNNHQELG (68 aa)) is disordered. Over residues 496-507 (TSSQNSGSSTGD) the composition is skewed to low complexity. Residues 508–517 (SSGGTGGGGR) show a composition bias toward gly residues. The span at 523 to 534 (GDTTTNTGGKTS) shows a compositional bias: low complexity. The span at 542–554 (TQTQSNNNHQELG) shows a compositional bias: polar residues. Asn-557 carries an N-linked (GlcNAc...) asparagine glycan. The helical transmembrane segment at 567–587 (AGIGLLIMGFLVLGLVPFLLM) threads the bilayer. At 588-1054 (CCDCGGAPGA…TKYSTVQYTK (467 aa)) the chain is on the cytoplasmic side. 5 Desmoglein repeat repeats span residues 830–856 (TYPS…TVTE), 857–886 (SYTT…ERVV), 887–916 (GPIS…ERVI), 917–944 (APSS…ERVI), and 945–973 (RPAS…ERVV). Residues 1018-1040 (GHVRSSSDHHFSQTLGSASPSTA) are disordered. The segment covering 1029 to 1040 (SQTLGSASPSTA) has biased composition (polar residues).

As to quaternary structure, binds to JUP/plakoglobin. Interacts with PKP2. Interacts with DSC3; there is evidence to suggest that the interaction promotes cell-cell adhesion of keratinocytes.

The protein resides in the cell membrane. The protein localises to the cell junction. It is found in the desmosome. It localises to the cytoplasm. Its subcellular location is the nucleus. Its function is as follows. Component of intercellular desmosome junctions. Involved in the interaction of plaque proteins and intermediate filaments mediating cell-cell adhesion. The polypeptide is Desmoglein-1 (DSG1) (Canis lupus familiaris (Dog)).